Here is a 326-residue protein sequence, read N- to C-terminus: ATP synthase subunit b 2 (326 aa).

The chain crosses the membrane as a helical span at residues 2-22 (LIDWFTVVAQALNFLILVWLL). Composition is skewed to basic and acidic residues over residues 275 to 298 (QQGR…RKEN) and 306 to 326 (PPPE…IGSP). The tract at residues 275 to 326 (QQGRKEGRAVQNWDKAESEIRKENLSPAKTEPPPEAKAKPKPEEPKPEIGSP) is disordered.

This sequence belongs to the ATPase B chain family. In terms of assembly, F-type ATPases have 2 components, F(1) - the catalytic core - and F(0) - the membrane proton channel. F(1) has five subunits: alpha(3), beta(3), gamma(1), delta(1), epsilon(1). F(0) has three main subunits: a(1), b(2) and c(10-14). The alpha and beta chains form an alternating ring which encloses part of the gamma chain. F(1) is attached to F(0) by a central stalk formed by the gamma and epsilon chains, while a peripheral stalk is formed by the delta and b chains.

It is found in the cell inner membrane. In terms of biological role, f(1)F(0) ATP synthase produces ATP from ADP in the presence of a proton or sodium gradient. F-type ATPases consist of two structural domains, F(1) containing the extramembraneous catalytic core and F(0) containing the membrane proton channel, linked together by a central stalk and a peripheral stalk. During catalysis, ATP synthesis in the catalytic domain of F(1) is coupled via a rotary mechanism of the central stalk subunits to proton translocation. Functionally, component of the F(0) channel, it forms part of the peripheral stalk, linking F(1) to F(0). The polypeptide is ATP synthase subunit b 2 (Albidiferax ferrireducens (strain ATCC BAA-621 / DSM 15236 / T118) (Rhodoferax ferrireducens)).